We begin with the raw amino-acid sequence, 80 residues long: Exodeoxyribonuclease 7 small subunit (80 aa).

The protein belongs to the XseB family. In terms of assembly, heterooligomer composed of large and small subunits.

It localises to the cytoplasm. It carries out the reaction Exonucleolytic cleavage in either 5'- to 3'- or 3'- to 5'-direction to yield nucleoside 5'-phosphates.. In terms of biological role, bidirectionally degrades single-stranded DNA into large acid-insoluble oligonucleotides, which are then degraded further into small acid-soluble oligonucleotides. The chain is Exodeoxyribonuclease 7 small subunit from Klebsiella pneumoniae (strain 342).